Reading from the N-terminus, the 228-residue chain is 7-cyano-7-deazaguanine synthase (228 aa).

9 to 19 contacts ATP; the sequence is YSGGLDSTTCM. 4 residues coordinate Zn(2+): C189, C199, C202, and C205.

Belongs to the QueC family. Zn(2+) is required as a cofactor.

The catalysed reaction is 7-carboxy-7-deazaguanine + NH4(+) + ATP = 7-cyano-7-deazaguanine + ADP + phosphate + H2O + H(+). It participates in purine metabolism; 7-cyano-7-deazaguanine biosynthesis. Its function is as follows. Catalyzes the ATP-dependent conversion of 7-carboxy-7-deazaguanine (CDG) to 7-cyano-7-deazaguanine (preQ(0)). The protein is 7-cyano-7-deazaguanine synthase of Geotalea uraniireducens (strain Rf4) (Geobacter uraniireducens).